The following is a 375-amino-acid chain: Succinyl-diaminopimelate desuccinylase (375 aa).

Histidine 75 is a binding site for Zn(2+). Aspartate 77 is a catalytic residue. Zn(2+) is bound at residue aspartate 106. Glutamate 136 serves as the catalytic Proton acceptor. Zn(2+) is bound by residues glutamate 137, glutamate 165, and histidine 348.

It belongs to the peptidase M20A family. DapE subfamily. As to quaternary structure, homodimer. It depends on Zn(2+) as a cofactor. Requires Co(2+) as cofactor.

It carries out the reaction N-succinyl-(2S,6S)-2,6-diaminopimelate + H2O = (2S,6S)-2,6-diaminopimelate + succinate. It participates in amino-acid biosynthesis; L-lysine biosynthesis via DAP pathway; LL-2,6-diaminopimelate from (S)-tetrahydrodipicolinate (succinylase route): step 3/3. In terms of biological role, catalyzes the hydrolysis of N-succinyl-L,L-diaminopimelic acid (SDAP), forming succinate and LL-2,6-diaminopimelate (DAP), an intermediate involved in the bacterial biosynthesis of lysine and meso-diaminopimelic acid, an essential component of bacterial cell walls. The chain is Succinyl-diaminopimelate desuccinylase from Novosphingobium aromaticivorans (strain ATCC 700278 / DSM 12444 / CCUG 56034 / CIP 105152 / NBRC 16084 / F199).